Here is a 71-residue protein sequence, read N- to C-terminus: ATP synthase F(0) complex subunit e, mitochondrial (71 aa).

An N6-acetyllysine modification is found at Lys-34.

This sequence belongs to the ATPase e subunit family. Component of the ATP synthase complex composed at least of ATP5F1A/subunit alpha, ATP5F1B/subunit beta, ATP5MC1/subunit c (homooctomer), MT-ATP6/subunit a, MT-ATP8/subunit 8, ATP5ME/subunit e, ATP5MF/subunit f, ATP5MG/subunit g, ATP5MK/subunit k, ATP5MJ/subunit j, ATP5F1C/subunit gamma, ATP5F1D/subunit delta, ATP5F1E/subunit epsilon, ATP5PF/subunit F6, ATP5PB/subunit b, ATP5PD/subunit d, ATP5PO/subunit OSCP. ATP synthase complex consists of a soluble F(1) head domain (subunits alpha(3) and beta(3)) - the catalytic core - and a membrane F(0) domain - the membrane proton channel (subunits c, a, 8, e, f, g, k and j). These two domains are linked by a central stalk (subunits gamma, delta, and epsilon) rotating inside the F1 region and a stationary peripheral stalk (subunits F6, b, d, and OSCP).

The protein localises to the mitochondrion. It localises to the mitochondrion inner membrane. Subunit e, of the mitochondrial membrane ATP synthase complex (F(1)F(0) ATP synthase or Complex V) that produces ATP from ADP in the presence of a proton gradient across the membrane which is generated by electron transport complexes of the respiratory chain. ATP synthase complex consist of a soluble F(1) head domain - the catalytic core - and a membrane F(1) domain - the membrane proton channel. These two domains are linked by a central stalk rotating inside the F(1) region and a stationary peripheral stalk. During catalysis, ATP synthesis in the catalytic domain of F(1) is coupled via a rotary mechanism of the central stalk subunits to proton translocation. In vivo, can only synthesize ATP although its ATP hydrolase activity can be activated artificially in vitro. Part of the complex F(0) domain. The chain is ATP synthase F(0) complex subunit e, mitochondrial from Bos taurus (Bovine).